A 115-amino-acid polypeptide reads, in one-letter code: Non-specific lipid-transfer protein Cw18 (115 aa).

The signal sequence occupies residues 1–25; sequence MARTAATKLALVALVAAMLLVAADA. Cystine bridges form between Cys-29-Cys-77, Cys-39-Cys-54, Cys-55-Cys-97, and Cys-75-Cys-111.

The protein belongs to the plant LTP family. As to expression, highly expressed in leaves and coleoptiles. No expression in roots.

Functionally, plant non-specific lipid-transfer proteins transfer phospholipids as well as galactolipids across membranes. May play a role in wax or cutin deposition in the cell walls of expanding epidermal cells and certain secretory tissues. This chain is Non-specific lipid-transfer protein Cw18 (CW18), found in Hordeum vulgare (Barley).